The chain runs to 2266 residues: Protein ELYS (2266 aa).

The seven-bladed beta propeller repeats stretch occupies residues 1–494; that stretch reads MRDLRAQVTS…SGVVHLTCTG (494 aa). The segment at 1–981 is necessary for cytoplasmic localization; that stretch reads MRDLRAQVTS…QTLKINVMND (981 aa). Phosphoserine is present on residues Ser509, Ser528, Ser1080, Ser1138, Ser1142, Ser1150, Ser1153, Ser1155, and Ser1160. Positions 591–1092 are important for nuclear localization; it reads VVLTKEEFDR…IEEPSPIVYS (502 aa). The interval 1019–2266 is disordered; the sequence is YHLSTSSVFR…PKQILRRKML (1248 aa). Positions 1149 to 2266 are necessary for nuclear localization; the sequence is RSLPSSSQLK…PKQILRRKML (1118 aa). Thr1175 is subject to Phosphothreonine. Phosphoserine is present on residues Ser1214, Ser1218, Ser1222, Ser1232, and Ser1250. Residue Thr1257 is modified to Phosphothreonine. 2 positions are modified to phosphoserine: Ser1283 and Ser1297. Composition is skewed to polar residues over residues 1305 to 1320 and 1335 to 1353; these read KGNS…TTLE and FTAS…NVTE. Thr1369 bears the Phosphothreonine mark. Residues Ser1371 and Ser1513 each carry the phosphoserine modification. Positions 1446 to 1698 are mediates transcriptional activity; it reads RANDNKSMAD…MEQSIHETIP (253 aa). Phosphothreonine is present on Thr1517. Residues Ser1533, Ser1541, Ser1729, and Ser1806 each carry the phosphoserine modification. Composition is skewed to polar residues over residues 1796-1808 and 1822-1838; these read LSQN…NSVT and ILEN…ITTG. Residue Thr1808 is modified to Phosphothreonine. The tract at residues 1842 to 2266 is important for nuclear localization and chromatin binding; it reads KRLKSSQLLE…PKQILRRKML (425 aa). A phosphoserine mark is found at Ser1878, Ser1884, and Ser1898. The segment covering 1908-1919 has biased composition (polar residues); that stretch reads STNLDASENTGN. Composition is skewed to basic and acidic residues over residues 1920–1930 and 1940–1952; these read KQDDKSSDKQL and GREV…REDS. Phosphoserine occurs at positions 1944 and 1946. Positions 1971–1983 form a DNA-binding region, a.T hook; sequence PRKRGRPRKINPS. Residues 1986–2004 are compositionally biased toward basic and acidic residues; sequence VGSKAVKEERSPKKKEAPS. A phosphoserine mark is found at Ser1996, Ser2043, Ser2044, and Ser2060. Residues 2064–2084 are compositionally biased toward basic and acidic residues; sequence VSEERTDEMTHKETNEQEERL. Ser2089, Ser2120, Ser2123, and Ser2154 each carry phosphoserine. Positions 2169 to 2179 are enriched in basic and acidic residues; the sequence is NKLEDELKDDA. The segment covering 2188–2197 has biased composition (basic residues); that stretch reads PKAKRIRTSK. Phosphoserine occurs at positions 2212, 2222, and 2226.

Belongs to the ELYS family. Associates with the Nup107-160 subcomplex of the NPC.

The protein resides in the cytoplasm. It is found in the nucleus. Its subcellular location is the nucleus envelope. The protein localises to the nucleus matrix. It localises to the chromosome. The protein resides in the centromere. It is found in the kinetochore. Its subcellular location is the nucleoplasm. The protein localises to the nuclear pore complex. Required for the assembly of a functional nuclear pore complex (NPC) on the surface of chromosomes as nuclei form at the end of mitosis. May initiate NPC assembly by binding to chromatin and recruiting the Nup107-160 subcomplex of the NPC. Also required for the localization of the Nup107-160 subcomplex of the NPC to the kinetochore during mitosis and for the completion of cytokinesis. The protein is Protein ELYS (AHCTF1) of Homo sapiens (Human).